A 164-amino-acid polypeptide reads, in one-letter code: UPF0304 protein HSM_1818 (164 aa).

Belongs to the UPF0304 family.

The chain is UPF0304 protein HSM_1818 from Histophilus somni (strain 2336) (Haemophilus somnus).